The primary structure comprises 472 residues: MNVHTAGPRHAEKTRHTATPQRVQPSDDLLRLASNVWPRNITRDETGVACIAGNKLTDLAGEYGTPLFVIDEDDFRFRCREIAAAFGGGENVHYAAKAFLCTEIARWIDEEGLSLDVCSGGELAVALHASFPPERISLHGNNKSVAELKDAVKAGVGYIVLDSTTEIERLDAIAGEAGIVQDVLVRLTVGVEAHTHEFIATAHEDQKFGLSVASGAAMAAVRRVFATDNLRLVGLHSHIGSQIFDVAGFELAAHRVIGLLCDIVGEFDPEKTAQLSIVDLGGGLGISYLPDDDPPPIFELAAKLGAIVSNESAAVGLPVPKLMVEPGRAIAGPGTITLYEVGTIKDVDVSATAHRRYVSIDGGMSDNIRTALYDAQYDVRLVSRTSDAPAAPASIVGKHCESGDIVVRDTWVPDDLKPGDLVGVAATGAYCYSLSSRYNMLGRPAVVAVCAGQARLILRRETVDDLLSLEVR.

The tract at residues M1–V23 is disordered. K97 is subject to N6-(pyridoxal phosphate)lysine. Pyridoxal 5'-phosphate-binding positions include G283 and E325–R328. 3 residues coordinate substrate: R328, R369, and Y373. C400 (proton donor) is an active-site residue. The substrate site is built by E401 and Y430. A pyridoxal 5'-phosphate-binding site is contributed by Y430.

Belongs to the Orn/Lys/Arg decarboxylase class-II family. LysA subfamily. As to quaternary structure, homodimer. The cofactor is pyridoxal 5'-phosphate.

It carries out the reaction meso-2,6-diaminopimelate + H(+) = L-lysine + CO2. It participates in amino-acid biosynthesis; L-lysine biosynthesis via DAP pathway; L-lysine from DL-2,6-diaminopimelate: step 1/1. In terms of biological role, specifically catalyzes the decarboxylation of meso-diaminopimelate (meso-DAP) to L-lysine. This chain is Diaminopimelate decarboxylase, found in Mycobacterium leprae (strain TN).